We begin with the raw amino-acid sequence, 197 residues long: Class A basic helix-loop-helix protein 15 (197 aa).

Residues 1 to 12 (MKTKNRPPRRRT) are compositionally biased toward basic residues. Disordered stretches follow at residues 1–82 (MKTK…ERER) and 175–197 (TEDQPQGHLQRYSTQIHSFREGS). 2 positions are modified to phosphothreonine: threonine 12 and threonine 25. The segment covering 27 to 36 (DRSQSGSGAS) has biased composition (polar residues). Residues 65-82 (SRRENSVQRRLESNERER) are compositionally biased toward basic and acidic residues. Residues 72–124 (QRRLESNERERQRMHKLNNAFQALREVIPHVRADKKLSKIETLTLAKNYIKSL) enclose the bHLH domain.

Forms homodimers or heterodimers with TCF3 gene products E12 and E47. These dimers bind to the E-box site, however, heterodimer with MYOD1 does not bind target DNA. Expressed in liver, spleen and olfactory epithelium. Weaker expression is seen in skeletal muscle, cardiac muscle, eye and brain tissue.

The protein resides in the nucleus. Plays a role in controlling the transcriptional activity of MyoD, ensuring that expanding myoblast populations remain undifferentiated. Repression may occur through muscle-specific E-box occupancy by homodimers. May also negatively regulate bHLH-mediated transcription through an N-terminal repressor domain. Serves as a key regulator of acinar cell function, stability, and identity. Also required for normal organelle localization in exocrine cells and for mitochondrial calcium ion transport. May function as a unique regulator of gene expression in several different embryonic and postnatal cell lineages. Binds to the E-box consensus sequence 5'-CANNTG-3'. The sequence is that of Class A basic helix-loop-helix protein 15 (Bhlha15) from Rattus norvegicus (Rat).